The sequence spans 214 residues: Pyridoxine/pyridoxamine 5'-phosphate oxidase (214 aa).

Residues 8-11 and lysine 66 each bind substrate; that span reads RTNY. FMN is bound by residues 61–66, 76–77, arginine 82, lysine 83, and glutamine 105; these read RIVLIK and FT. Residues tyrosine 123, arginine 127, and serine 131 each contribute to the substrate site. FMN-binding positions include 140 to 141 and tryptophan 184; that span reads QS. 190–192 lines the substrate pocket; that stretch reads RLH. Arginine 194 is a binding site for FMN.

Belongs to the pyridoxamine 5'-phosphate oxidase family. Homodimer. FMN is required as a cofactor.

It carries out the reaction pyridoxamine 5'-phosphate + O2 + H2O = pyridoxal 5'-phosphate + H2O2 + NH4(+). The catalysed reaction is pyridoxine 5'-phosphate + O2 = pyridoxal 5'-phosphate + H2O2. The protein operates within cofactor metabolism; pyridoxal 5'-phosphate salvage; pyridoxal 5'-phosphate from pyridoxamine 5'-phosphate: step 1/1. It functions in the pathway cofactor metabolism; pyridoxal 5'-phosphate salvage; pyridoxal 5'-phosphate from pyridoxine 5'-phosphate: step 1/1. Catalyzes the oxidation of either pyridoxine 5'-phosphate (PNP) or pyridoxamine 5'-phosphate (PMP) into pyridoxal 5'-phosphate (PLP). The chain is Pyridoxine/pyridoxamine 5'-phosphate oxidase from Burkholderia mallei (strain NCTC 10247).